Reading from the N-terminus, the 163-residue chain is Putative pre-16S rRNA nuclease (163 aa).

This sequence belongs to the YqgF nuclease family.

The protein localises to the cytoplasm. Its function is as follows. Could be a nuclease involved in processing of the 5'-end of pre-16S rRNA. This Nitrobacter hamburgensis (strain DSM 10229 / NCIMB 13809 / X14) protein is Putative pre-16S rRNA nuclease.